Reading from the N-terminus, the 136-residue chain is Transcription antitermination protein NusB (136 aa).

This sequence belongs to the NusB family.

Involved in transcription antitermination. Required for transcription of ribosomal RNA (rRNA) genes. Binds specifically to the boxA antiterminator sequence of the ribosomal RNA (rrn) operons. The protein is Transcription antitermination protein NusB of Pseudoalteromonas translucida (strain TAC 125).